The following is a 136-amino-acid chain: Holo-[acyl-carrier-protein] synthase (136 aa).

D8 and E57 together coordinate Mg(2+).

Belongs to the P-Pant transferase superfamily. AcpS family. The cofactor is Mg(2+).

The protein resides in the cytoplasm. It carries out the reaction apo-[ACP] + CoA = holo-[ACP] + adenosine 3',5'-bisphosphate + H(+). In terms of biological role, transfers the 4'-phosphopantetheine moiety from coenzyme A to a Ser of acyl-carrier-protein. In Methylorubrum populi (strain ATCC BAA-705 / NCIMB 13946 / BJ001) (Methylobacterium populi), this protein is Holo-[acyl-carrier-protein] synthase.